The chain runs to 188 residues: Proline-rich protein 3 (188 aa).

Residues 1–157 (MPKRKKQNHH…DPQVMEDKSD (157 aa)) are disordered. Composition is skewed to pro residues over residues 35-46 (IGPPSLLGPPPM) and 69-82 (LIPPLLSLPPPPWG). The segment covering 83–96 (RGPIRRGLGPRSSP) has biased composition (low complexity). The span at 145–157 (PKDDPQVMEDKSD) shows a compositional bias: basic and acidic residues. Residues 155–183 (KSDRPVCRHFAKKGHCRYEDLCAFYHPGV) form a C3H1-type zinc finger.

This chain is Proline-rich protein 3 (PRR3), found in Homo sapiens (Human).